Consider the following 454-residue polypeptide: tRNA modification GTPase MnmE (454 aa).

3 residues coordinate (6S)-5-formyl-5,6,7,8-tetrahydrofolate: R23, E80, and K120. Residues 216–377 (GMKVVIAGRP…LRNHLKQSMG (162 aa)) enclose the TrmE-type G domain. N226 provides a ligand contact to K(+). Residues 226 to 231 (NAGKSS), 245 to 251 (TDIAGTT), 270 to 273 (DTAG), 335 to 338 (NKAD), and 358 to 360 (SAR) each bind GTP. Residue S230 participates in Mg(2+) binding. Residues T245, I247, and T250 each coordinate K(+). Mg(2+) is bound at residue T251. K454 contacts (6S)-5-formyl-5,6,7,8-tetrahydrofolate.

Belongs to the TRAFAC class TrmE-Era-EngA-EngB-Septin-like GTPase superfamily. TrmE GTPase family. In terms of assembly, homodimer. Heterotetramer of two MnmE and two MnmG subunits. Requires K(+) as cofactor.

It is found in the cytoplasm. Exhibits a very high intrinsic GTPase hydrolysis rate. Involved in the addition of a carboxymethylaminomethyl (cmnm) group at the wobble position (U34) of certain tRNAs, forming tRNA-cmnm(5)s(2)U34. The polypeptide is tRNA modification GTPase MnmE (Salmonella choleraesuis (strain SC-B67)).